Consider the following 102-residue polypeptide: Small ribosomal subunit protein uS10 (102 aa).

Belongs to the universal ribosomal protein uS10 family. In terms of assembly, part of the 30S ribosomal subunit.

Its function is as follows. Involved in the binding of tRNA to the ribosomes. The polypeptide is Small ribosomal subunit protein uS10 (Lacticaseibacillus casei (strain BL23) (Lactobacillus casei)).